Here is a 221-residue protein sequence, read N- to C-terminus: 2,3-bisphosphoglycerate-dependent phosphoglycerate mutase (221 aa).

Residues 8–15, 21–22, R60, 87–90, K98, 114–115, and 174–175 each bind substrate; these read RHGNSLWN, TG, ERHY, RR, and GN. H9 functions as the Tele-phosphohistidine intermediate in the catalytic mechanism. Residue E87 is the Proton donor/acceptor of the active site. The segment at 114–140 is disordered; the sequence is RRGYDTPPPPLHSQADDPRYEEPPPLS.

The protein belongs to the phosphoglycerate mutase family. BPG-dependent PGAM subfamily.

The catalysed reaction is (2R)-2-phosphoglycerate = (2R)-3-phosphoglycerate. The protein operates within carbohydrate degradation; glycolysis; pyruvate from D-glyceraldehyde 3-phosphate: step 3/5. Functionally, catalyzes the interconversion of 2-phosphoglycerate and 3-phosphoglycerate. This chain is 2,3-bisphosphoglycerate-dependent phosphoglycerate mutase, found in Tropheryma whipplei (strain TW08/27) (Whipple's bacillus).